The following is a 132-amino-acid chain: Agouti-signaling protein (132 aa).

The first 22 residues, 1–22 (MDVTRLLLATLLVFLCFFTAYS), serve as a signal peptide directing secretion. A glycan (N-linked (GlcNAc...) asparagine) is linked at Asn-39. The disordered stretch occupies residues 60–88 (KQISRKEAEKKRSSKKEASMKKVARPRTP). The span at 63–79 (SRKEAEKKRSSKKEASM) shows a compositional bias: basic and acidic residues. Disulfide bonds link Cys-93–Cys-108, Cys-100–Cys-114, Cys-107–Cys-125, Cys-111–Cys-132, and Cys-116–Cys-123. One can recognise an Agouti domain in the interval 93–132 (CVATRDSCKPPAPACCDPCASCQCRFFRSACSCRVLSLNC).

Its subcellular location is the secreted. In terms of biological role, involved in the regulation of melanogenesis. The binding of ASP to MC1R precludes alpha-MSH initiated signaling and thus blocks production of cAMP, leading to a down-regulation of eumelanogenesis (brown/black pigment) and thus increasing synthesis of pheomelanin (yellow/red pigment). In Macaca cyclopis (Taiwan macaque), this protein is Agouti-signaling protein (ASIP).